Consider the following 454-residue polypeptide: Venom prothrombin activator porpharin-D (454 aa).

The N-terminal stretch at 1–20 is a signal peptide; it reads MAPQLLLCLILTFLWSLPEA. The propeptide occupies 21–40; sequence ESNVFLKSKEANRFLQRTKR. The region spanning 41–86 is the Gla domain; that stretch reads SNSLFEEFRPGNIERECIEEKCSKEEAREIFKDNEKTEAFWNVYVD. Residues Glu46, Glu47, Glu54, Glu56, Glu59, Glu60, Glu65, Glu66, Glu69, and Glu75 each carry the 4-carboxyglutamate modification. A disulfide bridge connects residues Cys57 and Cys62. Positions 86-122 constitute an EGF-like 1; calcium-binding domain; it reads DGDQCSSNPCHYGGTCKDGIGSYTCTCLPNYEGKNCE. 11 disulfides stabilise this stretch: Cys90-Cys101, Cys95-Cys110, Cys112-Cys121, Cys129-Cys140, Cys136-Cys149, Cys151-Cys164, Cys172-Cys316, Cys216-Cys221, Cys236-Cys252, Cys364-Cys378, and Cys389-Cys417. The O-linked (Hex...) serine glycan is linked to Ser92. One can recognise an EGF-like 2 domain in the interval 129–164; sequence CRFFNGNCWHFCKPVQNDTQCSCAESYRLGDDGHSC. A propeptide spans 182 to 209 (activation peptide); sequence REASLPDFVQSQNATLLKKSDNPSPDIR. A Peptidase S1 domain is found at 210–441; that stretch reads IINGMDCKLG…FIPWIKAVMR (232 aa). Active-site charge relay system residues include His251 and Asp296. The active-site Charge relay system is the Ser393.

The protein belongs to the peptidase S1 family. Snake venom subfamily. In terms of assembly, heterodimer of a light chain and a heavy chain; disulfide-linked. In terms of processing, the vitamin K-dependent, enzymatic carboxylation of some glutamate residues allows the modified protein to bind calcium. As to expression, expressed by the venom gland.

It localises to the secreted. The catalysed reaction is Selective cleavage of Arg-|-Thr and then Arg-|-Ile bonds in prothrombin to form thrombin.. Functionally, snake prothrombin activator that attacks the hemostatic system of prey. This protein is functionally similar to blood coagulation factor Xa. The sequence is that of Venom prothrombin activator porpharin-D from Pseudechis porphyriacus (Red-bellied black snake).